The primary structure comprises 188 residues: Elongation factor P (188 aa).

Lysine 34 carries the post-translational modification N6-(3,6-diaminohexanoyl)-5-hydroxylysine.

It belongs to the elongation factor P family. May be beta-lysylated on the epsilon-amino group of Lys-34 by the combined action of EpmA and EpmB, and then hydroxylated on the C5 position of the same residue by EpmC (if this protein is present). Lysylation is critical for the stimulatory effect of EF-P on peptide-bond formation. The lysylation moiety may extend toward the peptidyltransferase center and stabilize the terminal 3-CCA end of the tRNA. Hydroxylation of the C5 position on Lys-34 may allow additional potential stabilizing hydrogen-bond interactions with the P-tRNA.

Its subcellular location is the cytoplasm. Its pathway is protein biosynthesis; polypeptide chain elongation. Its function is as follows. Involved in peptide bond synthesis. Alleviates ribosome stalling that occurs when 3 or more consecutive Pro residues or the sequence PPG is present in a protein, possibly by augmenting the peptidyl transferase activity of the ribosome. Modification of Lys-34 is required for alleviation. In Vibrio vulnificus (strain CMCP6), this protein is Elongation factor P.